A 591-amino-acid polypeptide reads, in one-letter code: MSIRGVGGNGNSRIPSHNGDGSNRRSQNTKGNNKVEDRVCSLYSSRSNENRESPYAVVDVSSMIESTPTSGETTRASRGVFSRFQRGLVRVADKVRRAVQCAWSSVSTRRSSATRAAESGSSSRTARGASSGYREYSPSAARGLRLMFTDFWRTRVLRQTSPMAGVFGNLDVNEARLMAAYTSECADHLEANKLAGPDGVAAAREIAKRWEQRVRDLQDKGAARKLLNDPLGRRTPNYQSKNPGEYTVGNSMFYDGPQVANLQNVDTGFWLDMSNLSDVVLSREIQTGLRARATLEESMPMLENLEERFRRLQETCDAARTEIEESGWTRESASRMEGDEAQGPSRAQQAFQSFVNECNSIEFSFGSFGEHVRVLCARVSRGLAAAGEAIRRCFSCCKGSTHRYAPRDDLSPEGASLAETLARFADDMGIERGADGTYDIPLVDDWRRGVPSIEGEGSDSIYEIMMPIYEVMDMDLETRRSFAVQQGHYQDPRASDYDLPRASDYDLPRSPYPTPPLPPRYQLQNMDVEAGFREAVYASFVAGMYNYVVTQPQERIPNSQQVEGILRDMLTNGSQTFRDLMRRWNREVDRE.

The segment covering 1 to 10 (MSIRGVGGNG) has biased composition (gly residues). 4 disordered regions span residues 1 to 37 (MSIR…KVED), 110 to 135 (RSSA…GYRE), 324 to 344 (EESG…AQGP), and 487 to 517 (GHYQ…TPPL). Residues 11–32 (NSRIPSHNGDGSNRRSQNTKGN) show a composition bias toward polar residues. Low complexity predominate over residues 110 to 132 (RSSATRAAESGSSSRTARGASSG). Residues 490–507 (QDPRASDYDLPRASDYDL) show a composition bias toward basic and acidic residues.

To C.muridarum TC_0268.

This is an uncharacterized protein from Chlamydia trachomatis serovar D (strain ATCC VR-885 / DSM 19411 / UW-3/Cx).